Consider the following 143-residue polypeptide: Large ribosomal subunit protein bL17 (143 aa).

The segment covering 124-133 (GAGDRARLEA) has biased composition (basic and acidic residues). The interval 124–143 (GAGDRARLEAEGTDAEAAAA) is disordered.

This sequence belongs to the bacterial ribosomal protein bL17 family. As to quaternary structure, part of the 50S ribosomal subunit. Contacts protein L32.

This is Large ribosomal subunit protein bL17 from Mesorhizobium japonicum (strain LMG 29417 / CECT 9101 / MAFF 303099) (Mesorhizobium loti (strain MAFF 303099)).